Here is a 1085-residue protein sequence, read N- to C-terminus: DNA polymerase (1085 aa).

Positions 1059 to 1085 are disordered; the sequence is YDQKRPNPRPQEPLLENPFWDDSSQTA.

Belongs to the DNA polymerase type-B family. As to quaternary structure, heterodimer with the terminal protein; this heterodimer binds to bp 9 to 18 of the genome. Forms a complex with viral pTP, DBP and hosts NFIA and POU2F1/OCT1 for initiation of replication.

It localises to the host nucleus. It catalyses the reaction DNA(n) + a 2'-deoxyribonucleoside 5'-triphosphate = DNA(n+1) + diphosphate. In terms of biological role, eukaryotic-type DNA polymerase involved in viral genomic replication. DNA synthesis is protein primed, and acts in a strand displacement replication. Functionally, eukaryotic-type DNA polymerase involved in viral genomic replication. DNA synthesis is protein primed, and acts in a strand displacement replication. Assembles in complex with viral pTP, DBP, host NFIA and host POU2F1/OCT1 on viral origin of replication. The polymerase covalently transfers dCMP onto pTP, thereby initiating complementary strand synthesis. The chain is DNA polymerase from Pantherophis guttatus (Corn snake).